The following is a 444-amino-acid chain: Ribosomal protein uS12 methylthiotransferase RimO (444 aa).

An MTTase N-terminal domain is found at 3–119 (IKIGLVSLGC…IARAVRRVLE (117 aa)). Positions 12, 48, 82, 156, 160, and 163 each coordinate [4Fe-4S] cluster. The Radical SAM core domain occupies 142 to 372 (ATPPYTAYLK…MMLQQEISLQ (231 aa)). In terms of domain architecture, TRAM spans 375-444 (LKRVGEVIEV…EYDLTGETVL (70 aa)).

Belongs to the methylthiotransferase family. RimO subfamily. [4Fe-4S] cluster is required as a cofactor.

It is found in the cytoplasm. It carries out the reaction L-aspartate(89)-[ribosomal protein uS12]-hydrogen + (sulfur carrier)-SH + AH2 + 2 S-adenosyl-L-methionine = 3-methylsulfanyl-L-aspartate(89)-[ribosomal protein uS12]-hydrogen + (sulfur carrier)-H + 5'-deoxyadenosine + L-methionine + A + S-adenosyl-L-homocysteine + 2 H(+). Catalyzes the methylthiolation of an aspartic acid residue of ribosomal protein uS12. In Pelotomaculum thermopropionicum (strain DSM 13744 / JCM 10971 / SI), this protein is Ribosomal protein uS12 methylthiotransferase RimO.